A 268-amino-acid polypeptide reads, in one-letter code: Tryptophan synthase alpha chain (268 aa).

Residues Glu40 and Asp51 each act as proton acceptor in the active site.

This sequence belongs to the TrpA family. In terms of assembly, tetramer of two alpha and two beta chains.

It carries out the reaction (1S,2R)-1-C-(indol-3-yl)glycerol 3-phosphate + L-serine = D-glyceraldehyde 3-phosphate + L-tryptophan + H2O. The protein operates within amino-acid biosynthesis; L-tryptophan biosynthesis; L-tryptophan from chorismate: step 5/5. The alpha subunit is responsible for the aldol cleavage of indoleglycerol phosphate to indole and glyceraldehyde 3-phosphate. The chain is Tryptophan synthase alpha chain from Geobacillus kaustophilus (strain HTA426).